The primary structure comprises 867 residues: MVRICIQTPILLSFLLVLLFFISNCFASSQNNDDDKRIRVRVGLVLDLGSVEGKIVRSSVSMALSDFYDNHNDYKTRLSLLVRDSHGEPLLALDSVVDLLQTEGVQAIIGGNSLLEAKLLAELGEKARVPVISLNSPMSLSLSKYTHLIQATHNSASEVKGITAFLHGFDWNSVALVLEDHDDWRESMHFMVDHFHENNVHVQSKVAFSVTSSEDSLMDRLRELKDLGTTVFVVHLSEVIATRLFPCAEKLGMMGEGFAWILTSRSMSSFHDQFIDDLTKEAMEGVVGFKSYIPMSKELHNFTLRWRKTLPVEEVTGSEITRLSISGVWAHDVAWSLASAAEVTRMPTVTSTLLEAIKESRFKGLSGNFQLDDMKLLSDKFEIVNMIGSGERRVGFWNSNGSFSNRRQLSSTHDNLETIIWPGGSAQSPKGRSLRESGRKKLRVLVTSSNRFPRLMKVETDPITHEITIVEGFCIEVFQASIAPFNYEVEYIRWLNGTNYTKLAYALHSQKDKYDAAVGDITITSDRSMYVDFTLPYTEMGLGIVAAKERSMWVFFQPLTPNLWITSAAFFVLTGIIVWLIERAENKEFQGSWPQQIGVVIWFGFSTLVYAHREKLQHNLSRFVVTVWVFAVLILVTSYTATLTSMMTVQQIRFNANEDYVGHLSGSLIANAALTNSSLRAMRLLGLNTSEDYAQALMNKSVSYIVSELPYLKILLGENPGHFLMVKTQSTTNGFGFMFQKGSELAPNVSREIAKLRTSERLNEMERRWFDKQLPYTTDDTSNPITLYRFRGLFMITGVSFAFALAVLLILWLRERWEILVNSVNIYFSQRLRHFRILFTRTIHPSPLGLDNPIGENAVQMAQRNRR.

The first 27 residues, 1-27, serve as a signal peptide directing secretion; that stretch reads MVRICIQTPILLSFLLVLLFFISNCFA. The Extracellular segment spans residues 28–560; it reads SSQNNDDDKR…SMWVFFQPLT (533 aa). N-linked (GlcNAc...) asparagine glycans are attached at residues Asn-301, Asn-400, Asn-496, and Asn-499. Residues 561-581 form a helical membrane-spanning segment; it reads PNLWITSAAFFVLTGIIVWLI. Topologically, residues 582–590 are cytoplasmic; the sequence is ERAENKEFQ. The chain crosses the membrane as a helical span at residues 591–611; that stretch reads GSWPQQIGVVIWFGFSTLVYA. Over 612–622 the chain is Cytoplasmic; the sequence is HREKLQHNLSR. Residues 623 to 643 traverse the membrane as a helical segment; it reads FVVTVWVFAVLILVTSYTATL. The Extracellular portion of the chain corresponds to 644-792; that stretch reads TSMMTVQQIR…NPITLYRFRG (149 aa). N-linked (GlcNAc...) asparagine glycans are attached at residues Asn-676, Asn-688, Asn-699, and Asn-748. A helical membrane pass occupies residues 793-813; sequence LFMITGVSFAFALAVLLILWL. Residues 814–867 lie on the Cytoplasmic side of the membrane; the sequence is RERWEILVNSVNIYFSQRLRHFRILFTRTIHPSPLGLDNPIGENAVQMAQRNRR.

The protein belongs to the glutamate-gated ion channel (TC 1.A.10.1) family. As to quaternary structure, may form heteromers. In terms of tissue distribution, expressed predominantly in roots and siliques.

It is found in the membrane. In terms of biological role, glutamate-gated receptor that probably acts as a non-selective cation channel. May be involved in light-signal transduction and calcium homeostasis via the regulation of calcium influx into cells. The protein is Glutamate receptor 1.2 (GLR1.2) of Arabidopsis thaliana (Mouse-ear cress).